Reading from the N-terminus, the 524-residue chain is Chromosomal replication initiator protein DnaA (524 aa).

The domain I, interacts with DnaA modulators stretch occupies residues M1–P72. The segment at P72–S187 is domain II. Residues K188–S404 are domain III, AAA+ region. Residues G232, G234, K235, and T236 each contribute to the ATP site. The tract at residues K405–G524 is domain IV, binds dsDNA.

Belongs to the DnaA family. In terms of assembly, oligomerizes as a right-handed, spiral filament on DNA at oriC.

It is found in the cytoplasm. Functionally, plays an essential role in the initiation and regulation of chromosomal replication. ATP-DnaA binds to the origin of replication (oriC) to initiate formation of the DNA replication initiation complex once per cell cycle. Binds the DnaA box (a 9 base pair repeat at the origin) and separates the double-stranded (ds)DNA. Forms a right-handed helical filament on oriC DNA; dsDNA binds to the exterior of the filament while single-stranded (ss)DNA is stabiized in the filament's interior. The ATP-DnaA-oriC complex binds and stabilizes one strand of the AT-rich DNA unwinding element (DUE), permitting loading of DNA polymerase. After initiation quickly degrades to an ADP-DnaA complex that is not apt for DNA replication. Binds acidic phospholipids. The polypeptide is Chromosomal replication initiator protein DnaA (Burkholderia multivorans (strain ATCC 17616 / 249)).